Reading from the N-terminus, the 505-residue chain is MEEIQRYLQLDRSQQHDFLYPLIFQEYIYALAHDHSLNRSILLENPDYDNQLSFLIVKRLITRMYQQNHFIIFANDSNQNTFLGRNKNLYSQTISEGFSFIVEIPFYIRLIPSQAGKGILKSYNLRSIHSLFPFLENNFSHLNSVLDILIPHSVHLEILVQNLRYWVKDASSLHLLRFLFHEYWNCNPLSATKKRGFDFSPKRSQRLLFFLYNSHVCEYESIFVFLRNQSSHLRSTSFGVFLERIYFYVKMERLVEVFAKDFRASLWLFKDPFMHYVRYQGKSTLVSKGTPLLMNKWKYYLVNFWQCYFDLWVHSGRVYINQLPNHTLNFIGYLSSVRLNPSMVRSQMLENSFLINNAIKKLDTLVPIIPLIGSLAKAKFCNLLGHPISKPAWAGLSDSDIIDRFGQICRNLSHYHSGSSKKKSLYRIKYIIRLSCAKTLARKHKSTVRAFLKRLGSEFLEEFLTLEEEVLSLTFPRASSTFRGEYRSRIWYLDIIYINDLTNSQ.

Belongs to the intron maturase 2 family. MatK subfamily.

The protein localises to the plastid. It is found in the chloroplast. Its function is as follows. Usually encoded in the trnK tRNA gene intron. Probably assists in splicing its own and other chloroplast group II introns. The sequence is that of Maturase K from Cubanola domingensis.